The primary structure comprises 253 residues: Ubiquinone biosynthesis O-methyltransferase (253 aa).

S-adenosyl-L-methionine-binding residues include R47, G78, D99, and M141.

This sequence belongs to the methyltransferase superfamily. UbiG/COQ3 family.

It carries out the reaction a 3-demethylubiquinol + S-adenosyl-L-methionine = a ubiquinol + S-adenosyl-L-homocysteine + H(+). The catalysed reaction is a 3-(all-trans-polyprenyl)benzene-1,2-diol + S-adenosyl-L-methionine = a 2-methoxy-6-(all-trans-polyprenyl)phenol + S-adenosyl-L-homocysteine + H(+). The protein operates within cofactor biosynthesis; ubiquinone biosynthesis. In terms of biological role, O-methyltransferase that catalyzes the 2 O-methylation steps in the ubiquinone biosynthetic pathway. The sequence is that of Ubiquinone biosynthesis O-methyltransferase from Bradyrhizobium sp. (strain ORS 278).